A 322-amino-acid polypeptide reads, in one-letter code: 4-hydroxythreonine-4-phosphate dehydrogenase (322 aa).

Substrate contacts are provided by His-131 and Thr-132. The a divalent metal cation site is built by His-161, His-206, and His-259. Residues Lys-267, Asn-276, and Arg-285 each coordinate substrate.

This sequence belongs to the PdxA family. In terms of assembly, homodimer. Requires a divalent metal cation as cofactor.

The protein localises to the cytoplasm. It catalyses the reaction 4-(phosphooxy)-L-threonine + NAD(+) = 3-amino-2-oxopropyl phosphate + CO2 + NADH. It participates in cofactor biosynthesis; pyridoxine 5'-phosphate biosynthesis; pyridoxine 5'-phosphate from D-erythrose 4-phosphate: step 4/5. Its function is as follows. Catalyzes the NAD(P)-dependent oxidation of 4-(phosphooxy)-L-threonine (HTP) into 2-amino-3-oxo-4-(phosphooxy)butyric acid which spontaneously decarboxylates to form 3-amino-2-oxopropyl phosphate (AHAP). In Sulfurihydrogenibium sp. (strain YO3AOP1), this protein is 4-hydroxythreonine-4-phosphate dehydrogenase.